Consider the following 272-residue polypeptide: ATP synthase subunit a (272 aa).

5 consecutive transmembrane segments (helical) span residues 41–61, 101–121, 143–165, 221–241, and 243–263; these read VLNIDSMFFSLLLGAIFLLIF, LIAPLALTIFVWVFLMNLMDL, VPSADVNITLSMALGVFILILYY, LIFILIAGLLPWWSQWILNVP, and AIFHILIITLQAFIFMVLTIV.

This sequence belongs to the ATPase A chain family. F-type ATPases have 2 components, CF(1) - the catalytic core - and CF(0) - the membrane proton channel. CF(1) has five subunits: alpha(3), beta(3), gamma(1), delta(1), epsilon(1). CF(0) has three main subunits: a(1), b(2) and c(9-12). The alpha and beta chains form an alternating ring which encloses part of the gamma chain. CF(1) is attached to CF(0) by a central stalk formed by the gamma and epsilon chains, while a peripheral stalk is formed by the delta and b chains.

Its subcellular location is the cell inner membrane. Key component of the proton channel; it plays a direct role in the translocation of protons across the membrane. In Sodalis glossinidius (strain morsitans), this protein is ATP synthase subunit a.